Here is a 110-residue protein sequence, read N- to C-terminus: Large ribosomal subunit protein uL22 (110 aa).

The protein belongs to the universal ribosomal protein uL22 family. In terms of assembly, part of the 50S ribosomal subunit.

This protein binds specifically to 23S rRNA; its binding is stimulated by other ribosomal proteins, e.g. L4, L17, and L20. It is important during the early stages of 50S assembly. It makes multiple contacts with different domains of the 23S rRNA in the assembled 50S subunit and ribosome. Functionally, the globular domain of the protein is located near the polypeptide exit tunnel on the outside of the subunit, while an extended beta-hairpin is found that lines the wall of the exit tunnel in the center of the 70S ribosome. In Glaesserella parasuis serovar 5 (strain SH0165) (Haemophilus parasuis), this protein is Large ribosomal subunit protein uL22.